The chain runs to 115 residues: Large ribosomal subunit protein bL19 (115 aa).

The protein belongs to the bacterial ribosomal protein bL19 family.

Functionally, this protein is located at the 30S-50S ribosomal subunit interface and may play a role in the structure and function of the aminoacyl-tRNA binding site. The sequence is that of Large ribosomal subunit protein bL19 from Sodalis glossinidius (strain morsitans).